The following is a 218-amino-acid chain: uncharacterized protein (218 aa).

This is an uncharacterized protein from Orgyia pseudotsugata multicapsid polyhedrosis virus (OpMNPV).